Here is a 434-residue protein sequence, read N- to C-terminus: Enolase (434 aa).

Residue Ala-41 coordinates phosphoenolpyruvate. Gln-165 contacts (2R)-2-phosphoglycerate. The active-site Proton donor is the Glu-207. Mg(2+) is bound by residues Asp-244, Glu-291, and Asp-318. The phosphoenolpyruvate site is built by Lys-343, Arg-372, Ser-373, and Lys-394. Residues Lys-343, Arg-372, Ser-373, and Lys-394 each contribute to the (2R)-2-phosphoglycerate site. Lys-343 serves as the catalytic Proton acceptor.

The protein belongs to the enolase family. In terms of assembly, homodimer and homooctamer; the homodimer is inactive. Mg(2+) serves as cofactor.

The protein localises to the cytoplasm. The protein resides in the secreted. It is found in the cell surface. It catalyses the reaction (2R)-2-phosphoglycerate = phosphoenolpyruvate + H2O. The protein operates within carbohydrate degradation; glycolysis; pyruvate from D-glyceraldehyde 3-phosphate: step 4/5. Functionally, catalyzes the reversible conversion of 2-phosphoglycerate (2-PG) into phosphoenolpyruvate (PEP). It is essential for the degradation of carbohydrates via glycolysis. Its function is as follows. 'Moonlights' as a laminin receptor. Binds laminin when expressed on the bacterial cell surface; this probably induces destruction of the extracellular matrix, favoring invasion and dissemination. This is Enolase from Staphylococcus aureus.